We begin with the raw amino-acid sequence, 229 residues long: MNDHVIYTQSDVGLNQFFAKIYSLVGMGVGLSAFVSYLMLYPFRENLISILVNQPMIYYGAAIIELILVFVASSAARKNTPAALPIFLIYSALNGFTLSFIIVAYAQTTVFQAFLSSAAVFFAMSIIGVKTKRDMSGLRKAMFAALIGVVVASLINLFIGSGMMSYVISVISVLIFSGLIASDNQMIKRVYQATNGQVGDGWAVAMALSLYLDFINLFISLLRIFGRND.

A run of 7 helical transmembrane segments spans residues 21-41, 56-76, 83-103, 109-129, 141-161, 162-182, and 202-222; these read IYSL…LMLY, MIYY…SSAA, ALPI…FIIV, TVFQ…IIGV, AMFA…FIGS, GMMS…LIAS, and WAVA…ISLL.

Belongs to the BI1 family.

It is found in the cell membrane. This is an uncharacterized protein from Streptococcus pyogenes serotype M1.